Reading from the N-terminus, the 267-residue chain is NAD kinase 1 (267 aa).

Aspartate 45 (proton acceptor) is an active-site residue. Residues 45-46 (DG), 122-123 (NE), arginine 149, aspartate 151, and alanine 186 contribute to the NAD(+) site.

The protein belongs to the NAD kinase family. It depends on a divalent metal cation as a cofactor.

Its subcellular location is the cytoplasm. It catalyses the reaction NAD(+) + ATP = ADP + NADP(+) + H(+). In terms of biological role, involved in the regulation of the intracellular balance of NAD and NADP, and is a key enzyme in the biosynthesis of NADP. Catalyzes specifically the phosphorylation on 2'-hydroxyl of the adenosine moiety of NAD to yield NADP. The chain is NAD kinase 1 from Oceanobacillus iheyensis (strain DSM 14371 / CIP 107618 / JCM 11309 / KCTC 3954 / HTE831).